Reading from the N-terminus, the 287-residue chain is 2-dehydro-3-deoxyphosphooctonate aldolase (287 aa).

It belongs to the KdsA family.

It is found in the cytoplasm. The enzyme catalyses D-arabinose 5-phosphate + phosphoenolpyruvate + H2O = 3-deoxy-alpha-D-manno-2-octulosonate-8-phosphate + phosphate. The protein operates within carbohydrate biosynthesis; 3-deoxy-D-manno-octulosonate biosynthesis; 3-deoxy-D-manno-octulosonate from D-ribulose 5-phosphate: step 2/3. It participates in bacterial outer membrane biogenesis; lipopolysaccharide biosynthesis. The chain is 2-dehydro-3-deoxyphosphooctonate aldolase from Magnetococcus marinus (strain ATCC BAA-1437 / JCM 17883 / MC-1).